A 286-amino-acid chain; its full sequence is Single myb histone 5 (286 aa).

The 61-residue stretch at 1 to 61 folds into the HTH myb-type domain; it reads MGAPKQRWTS…KWRNMNVIVT (61 aa). The H-T-H motif DNA-binding region spans 28-57; the sequence is WRMILNDPELSSTLRYRSNVDLKDKWRNMN. The region spanning 122-190 is the H15 domain; the sequence is SHSRLDNIIM…KVNRKYRIAP (69 aa). Residues 229-277 are a coiled coil; that stretch reads EAAAAAAAHAVAEAEAIMAEAEAAAREAEAAEAEARAAQAFAEAAVLTL.

It belongs to the histone H1/H5 family. SMH subfamily. As to quaternary structure, forms a homodimer and heterodimers.

The protein resides in the nucleus. It localises to the chromosome. The protein localises to the nucleolus. It is found in the telomere. In terms of biological role, binds preferentially double-stranded telomeric repeats, but may also bind to the single telomeric strand. The polypeptide is Single myb histone 5 (SMH5) (Zea mays (Maize)).